We begin with the raw amino-acid sequence, 562 residues long: Efflux pump apf11 (562 aa).

Composition is skewed to low complexity over residues 1–10 (MGDISAATKA) and 18–30 (TPET…SSDT). The disordered stretch occupies residues 1–36 (MGDISAATKAPAPPTPATPETNTTSSSSDTDVQHEP). N-linked (GlcNAc...) asparagine glycosylation occurs at asparagine 22. 8 helical membrane-spanning segments follow: residues 46–66 (LVIF…TIVA), 83–103 (AWYG…FGKI), 110–130 (KLVF…CALA), 141–161 (AIAG…TALT), 169–189 (VYTA…PIIG), 200–220 (WCFW…VFCL), 249–269 (GGLA…WGGT), and 278–298 (IIVL…HQHW). N-linked (GlcNAc...) asparagine glycosylation occurs at asparagine 312. The next 6 membrane-spanning stretches (helical) occupy residues 317–337 (MFLL…YYLP), 356–376 (LAMV…AGAV), 382–404 (FVFF…HPSI), 414–434 (ILFG…VQVA), 447–467 (VMLV…TLFL), and 516–536 (FLIG…IRWI).

The protein belongs to the major facilitator superfamily. TCR/Tet family.

It localises to the membrane. The protein operates within secondary metabolite biosynthesis. Its function is as follows. Efflux pump; part of the gene cluster that mediates the biosynthesis of the cyclic tetrapeptide apicidin F (APF). The chain is Efflux pump apf11 (apf11) from Gibberella fujikuroi (strain CBS 195.34 / IMI 58289 / NRRL A-6831) (Bakanae and foot rot disease fungus).